The following is a 264-amino-acid chain: Stage 0 sporulation protein A (264 aa).

In terms of domain architecture, Response regulatory spans 5–123 (KVCLVDDNKE…NLTSHIRQVS (119 aa)). 3 residues coordinate Ca(2+): Asp-10, Asp-11, and Asp-56. Asp-56 bears the 4-aspartylphosphate mark. A DNA-binding region (H-T-H motif) is located at residues 196–215 (PDIAKKYNTTASRVERAIRH).

Requires Ca(2+) as cofactor. In terms of processing, phosphorylated by KinA and KinB.

The protein localises to the cytoplasm. Its function is as follows. May play the central regulatory role in sporulation. It may be an element of the effector pathway responsible for the activation of sporulation genes in response to nutritional stress. Spo0A may act in concert with Spo0H (a sigma factor) to control the expression of some genes that are critical to the sporulation process. Repressor of abrB, activator of the spoIIa operon. Binds the DNA sequence 5'-TGNCGAA-3' (0A box). This is Stage 0 sporulation protein A (spo0A) from Bacillus anthracis.